The sequence spans 253 residues: Tryptophan synthase alpha chain (253 aa).

Residues glutamate 45 and aspartate 56 each act as proton acceptor in the active site.

It belongs to the TrpA family. Tetramer of two alpha and two beta chains.

The catalysed reaction is (1S,2R)-1-C-(indol-3-yl)glycerol 3-phosphate + L-serine = D-glyceraldehyde 3-phosphate + L-tryptophan + H2O. It participates in amino-acid biosynthesis; L-tryptophan biosynthesis; L-tryptophan from chorismate: step 5/5. The alpha subunit is responsible for the aldol cleavage of indoleglycerol phosphate to indole and glyceraldehyde 3-phosphate. In Flavobacterium johnsoniae (strain ATCC 17061 / DSM 2064 / JCM 8514 / BCRC 14874 / CCUG 350202 / NBRC 14942 / NCIMB 11054 / UW101) (Cytophaga johnsonae), this protein is Tryptophan synthase alpha chain.